The chain runs to 575 residues: Protein AUXIN SIGNALING F-BOX 2 (575 aa).

The F-box domain maps to 1–47 (MNYFPDEVIEHVFDFVTSHKDRNAISLVCKSWYKIERYSRQKVFIGN). K69 serves as a coordination point for 1D-myo-inositol hexakisphosphate. Positions 76–77 (DF) are interaction with auxin-responsive proteins. Residues 108 to 109 (KR) and R340 each bind 1D-myo-inositol hexakisphosphate. Residues 343–348 (PSDLLG) are interaction with auxin-responsive proteins. 396 to 398 (RFR) contacts 1D-myo-inositol hexakisphosphate. The segment at 400–404 (CILEP) is interaction with auxin-responsive proteins. A 1D-myo-inositol hexakisphosphate-binding site is contributed by R431. The interval 459-460 (AF) is interaction with auxin-responsive proteins. Residues 479–480 (KK) and R504 contribute to the 1D-myo-inositol hexakisphosphate site.

As to quaternary structure, part of a SCF (SKP1-cullin-F-box) protein ligase complex. Interacts with Aux/IAA proteins (IAA7) in an auxin-dependent manner. In terms of tissue distribution, ubiquitous, with higher levels in seedlings.

Its subcellular location is the nucleus. Its pathway is protein modification; protein ubiquitination. Its function is as follows. Component of SCF(ASK-cullin-F-box) E3 ubiquitin ligase complexes, which may mediate the ubiquitination and subsequent proteasomal degradation of target proteins. Confers sensitivity to the virulent bacterial pathogen P.syringae. Auxin receptor that mediates Aux/IAA proteins proteasomal degradation and auxin-regulated transcription. Involved in embryogenesis regulation by auxin. The polypeptide is Protein AUXIN SIGNALING F-BOX 2 (AFB2) (Arabidopsis thaliana (Mouse-ear cress)).